The primary structure comprises 544 residues: MNQSRRILRTVYLSLFLIGLFMLINDIFSSNILSSKSSDKEVQFDLNKSFDDNEMSSVKSNSFNLINKSQDIIVETGIYVATFSTFKGNLVSLKLKNHLNLEKNPTDLINIDRKNETFFDISFDYFVDDLFLYKKIDDFNHEFKAYFKNNGKTYEYVKKYTFSKKDEYLMQFKVTVNGLEDYNLFDFDSYKIIFSSEIERLSDKAKLQYNNYLSQIIYYDNKLKYGKDGLRINNPRWIGSSTKYFGVLVSKENMEVEFKKERGTLKSFIINNVRNKKNISDEFFIYAGPKDNRYLDVFDKRDDNTFGLFDIFFGMSVEKSFWYLIQVPMQMVMQVFYDVIPNWGLSIIFLTIVVRILIFPLTFKGFRATAELSKLQPKMKELQAKFKHDPKKLNEEMGRLYKEEGVNPLGGCLPVILQLPIFFALYSLVNNLFLLRGASFIPGWIDDLSIGDSVYHFGYKLYFVSWTDIRILPFIMMFTQLGSTIVSSNMDLKNLGAQQKFLYFGMPIMFFFILYNMPSGLLIYWITTNIFTILQQYYIKMHLS.

The next 5 membrane-spanning stretches (helical) occupy residues 13–33, 343–363, 409–429, 461–481, and 506–526; these read LSLFLIGLFMLINDIFSSNIL, WGLSIIFLTIVVRILIFPLTF, LGGCLPVILQLPIFFALYSLV, LYFVSWTDIRILPFIMMFTQL, and MPIMFFFILYNMPSGLLIYWI.

This sequence belongs to the OXA1/ALB3/YidC family. Type 1 subfamily. As to quaternary structure, interacts with the Sec translocase complex via SecD. Specifically interacts with transmembrane segments of nascent integral membrane proteins during membrane integration.

The protein resides in the cell inner membrane. Required for the insertion and/or proper folding and/or complex formation of integral membrane proteins into the membrane. Involved in integration of membrane proteins that insert both dependently and independently of the Sec translocase complex, as well as at least some lipoproteins. Aids folding of multispanning membrane proteins. The polypeptide is Membrane protein insertase YidC (Borreliella burgdorferi (strain ATCC 35210 / DSM 4680 / CIP 102532 / B31) (Borrelia burgdorferi)).